Reading from the N-terminus, the 132-residue chain is Small ribosomal subunit protein uS11 (132 aa).

This sequence belongs to the universal ribosomal protein uS11 family. Part of the 30S ribosomal subunit. Interacts with proteins S7 and S18. Binds to IF-3.

Its function is as follows. Located on the platform of the 30S subunit, it bridges several disparate RNA helices of the 16S rRNA. Forms part of the Shine-Dalgarno cleft in the 70S ribosome. This is Small ribosomal subunit protein uS11 from Chlamydia trachomatis serovar D (strain ATCC VR-885 / DSM 19411 / UW-3/Cx).